We begin with the raw amino-acid sequence, 480 residues long: 3-isopropylmalate dehydratase large subunit (480 aa).

[4Fe-4S] cluster contacts are provided by cysteine 360, cysteine 418, and cysteine 421.

The protein belongs to the aconitase/IPM isomerase family. LeuC type 1 subfamily. Heterodimer of LeuC and LeuD. It depends on [4Fe-4S] cluster as a cofactor.

The catalysed reaction is (2R,3S)-3-isopropylmalate = (2S)-2-isopropylmalate. It functions in the pathway amino-acid biosynthesis; L-leucine biosynthesis; L-leucine from 3-methyl-2-oxobutanoate: step 2/4. Catalyzes the isomerization between 2-isopropylmalate and 3-isopropylmalate, via the formation of 2-isopropylmaleate. The polypeptide is 3-isopropylmalate dehydratase large subunit (Anaeromyxobacter dehalogenans (strain 2CP-1 / ATCC BAA-258)).